Consider the following 427-residue polypeptide: Flotillin-1 (427 aa).

3 positions are modified to phosphoserine: S19, S163, and S385. T387 carries the post-translational modification Phosphothreonine.

It belongs to the band 7/mec-2 family. Flotillin subfamily. As to quaternary structure, heterooligomeric complex of flotillin-1 and flotillin-2 and caveolin-1 and caveolin-2. Interacts with ECPAS.

The protein resides in the cell membrane. It is found in the endosome. Its subcellular location is the membrane. It localises to the caveola. The protein localises to the melanosome. The protein resides in the membrane raft. Functionally, may act as a scaffolding protein within caveolar membranes, functionally participating in formation of caveolae or caveolae-like vesicles. The polypeptide is Flotillin-1 (FLOT1) (Sus scrofa (Pig)).